The sequence spans 122 residues: Basic phospholipase A2 homolog (122 aa).

Disulfide bonds link C26/C115, C28/C44, C43/C95, C49/C122, C50/C88, C57/C81, and C75/C86. Residues 105–117 form an important for membrane-damaging activities in eukaryotes and bacteria; heparin-binding region; sequence KRYMTYPNILCSS.

This sequence belongs to the phospholipase A2 family. Group II subfamily. N49 sub-subfamily. As to expression, expressed by the venom gland.

Its subcellular location is the secreted. This chain is Basic phospholipase A2 homolog, found in Gloydius halys (Chinese water mocassin).